A 227-amino-acid chain; its full sequence is Pyridoxal 5'-phosphate synthase subunit PdxT (227 aa).

52–54 lines the L-glutamine pocket; the sequence is GES. Cysteine 84 serves as the catalytic Nucleophile. Residues arginine 118 and 149 to 150 contribute to the L-glutamine site; that span reads IR. Catalysis depends on charge relay system residues histidine 189 and glutamate 191.

This sequence belongs to the glutaminase PdxT/SNO family. As to quaternary structure, in the presence of PdxS, forms a dodecamer of heterodimers. Only shows activity in the heterodimer.

It catalyses the reaction aldehydo-D-ribose 5-phosphate + D-glyceraldehyde 3-phosphate + L-glutamine = pyridoxal 5'-phosphate + L-glutamate + phosphate + 3 H2O + H(+). The catalysed reaction is L-glutamine + H2O = L-glutamate + NH4(+). The protein operates within cofactor biosynthesis; pyridoxal 5'-phosphate biosynthesis. Its function is as follows. Catalyzes the hydrolysis of glutamine to glutamate and ammonia as part of the biosynthesis of pyridoxal 5'-phosphate. The resulting ammonia molecule is channeled to the active site of PdxS. This Renibacterium salmoninarum (strain ATCC 33209 / DSM 20767 / JCM 11484 / NBRC 15589 / NCIMB 2235) protein is Pyridoxal 5'-phosphate synthase subunit PdxT.